A 94-amino-acid chain; its full sequence is MNLNMLHDNVLIEALEECNSSSPIQLPDSAKKKPTQGKVVAVGPGVYNHSGNILPMTIKVGDVVFYRQWAGNEIEFHDKKYIVMKESDIIAKEA.

The protein belongs to the GroES chaperonin family. As to quaternary structure, heptamer of 7 subunits arranged in a ring. Interacts with the chaperonin GroEL.

Its subcellular location is the cytoplasm. Functionally, together with the chaperonin GroEL, plays an essential role in assisting protein folding. The GroEL-GroES system forms a nano-cage that allows encapsulation of the non-native substrate proteins and provides a physical environment optimized to promote and accelerate protein folding. GroES binds to the apical surface of the GroEL ring, thereby capping the opening of the GroEL channel. This chain is Co-chaperonin GroES, found in Ehrlichia chaffeensis (strain ATCC CRL-10679 / Arkansas).